Reading from the N-terminus, the 192-residue chain is Phosphoheptose isomerase (192 aa).

The SIS domain maps to 35-192; sequence LIETLENQGK…CIERHFAHKN (158 aa). 50–52 contributes to the substrate binding site; that stretch reads NGG. Zn(2+)-binding residues include His59 and Glu63. Residues Glu63, 92 to 93, 118 to 120, Ser123, and Gln170 contribute to the substrate site; these read ND and STS. Residues Gln170 and His178 each contribute to the Zn(2+) site.

It belongs to the SIS family. GmhA subfamily. As to quaternary structure, homotetramer. Requires Zn(2+) as cofactor.

The protein resides in the cytoplasm. It catalyses the reaction 2 D-sedoheptulose 7-phosphate = D-glycero-alpha-D-manno-heptose 7-phosphate + D-glycero-beta-D-manno-heptose 7-phosphate. The protein operates within carbohydrate biosynthesis; D-glycero-D-manno-heptose 7-phosphate biosynthesis; D-glycero-alpha-D-manno-heptose 7-phosphate and D-glycero-beta-D-manno-heptose 7-phosphate from sedoheptulose 7-phosphate: step 1/1. Catalyzes the isomerization of sedoheptulose 7-phosphate in D-glycero-D-manno-heptose 7-phosphate. The chain is Phosphoheptose isomerase from Helicobacter pylori (strain P12).